The chain runs to 395 residues: Carbohydrate sulfotransferase 6 (395 aa).

Over methionine 1–arginine 5 the chain is Cytoplasmic. Residues valine 6–valine 26 traverse the membrane as a helical; Signal-anchor for type II membrane protein segment. At serine 27–asparagine 395 the chain is on the lumenal side. Tryptophan 49–phenylalanine 55 is a 3'-phosphoadenylyl sulfate binding site. Asparagine 116 carries an N-linked (GlcNAc...) asparagine glycan. Arginine 202–serine 210 lines the 3'-phosphoadenylyl sulfate pocket. Asparagine 229, asparagine 305, and asparagine 328 each carry an N-linked (GlcNAc...) asparagine glycan.

Belongs to the sulfotransferase 1 family. Gal/GlcNAc/GalNAc subfamily. As to expression, expressed in cornea. Mainly expressed in brain. Also expressed in spinal cord and trachea.

It is found in the golgi apparatus membrane. It carries out the reaction 3'-phosphoadenylyl sulfate + keratan = adenosine 3',5'-bisphosphate + keratan 6'-sulfate.. Sulfotransferase that utilizes 3'-phospho-5'-adenylyl sulfate (PAPS) as sulfonate donor to catalyze the transfer of sulfate to position 6 of non-reducing N-acetylglucosamine (GlcNAc) residues of keratan. Cooperates with B4GALT4 galactosyltransferase and B3GNT7 N-acetylglucosaminyltransferase to construct and elongate the sulfated disaccharide unit [-&gt;3Galbeta1-&gt;4(6-sulfoGlcNAcbeta)1-&gt;] within keratan sulfate polymer. Involved in biosynthesis of keratan sulfate in cornea, with an impact on proteoglycan fibril organization and corneal transparency. Involved in sulfation of endothelial mucins such as GLYCAM1. This chain is Carbohydrate sulfotransferase 6, found in Homo sapiens (Human).